Reading from the N-terminus, the 72-residue chain is Cytochrome c oxidase copper chaperone 2 (72 aa).

Residues cysteine 32 and cysteine 33 each coordinate Cu cation. A CHCH domain is found at 32 to 72; that stretch reads CCACPDTKKLRDECIVEHGESACTKWIEAHILCLRSEGFKV. 2 short sequence motifs (cx9C motif) span residues 35–45 and 54–64; these read CPDTKKLRDEC and CTKWIEAHILC. 2 disulfides stabilise this stretch: cysteine 35–cysteine 64 and cysteine 45–cysteine 54.

It belongs to the COX17 family.

Its subcellular location is the mitochondrion intermembrane space. Copper chaperone for cytochrome c oxidase (COX). Binds 2 copper ions and delivers them to the Cu(A) site of COX. This Arabidopsis thaliana (Mouse-ear cress) protein is Cytochrome c oxidase copper chaperone 2 (COX17-2).